Reading from the N-terminus, the 385-residue chain is GTPase Obg (385 aa).

An Obg domain is found at 1-159 (MHFIDQAEIE…RRLRLELKLI (159 aa)). In terms of domain architecture, OBG-type G spans 160–328 (AEVGIVGMPN…LLQRVWQCLG (169 aa)). Residues 166–173 (GMPNAGKS), 191–195 (FTTLQ), 213–216 (DIPG), 280–283 (NKID), and 309–311 (SAV) contribute to the GTP site. Mg(2+)-binding residues include serine 173 and threonine 193.

Belongs to the TRAFAC class OBG-HflX-like GTPase superfamily. OBG GTPase family. In terms of assembly, monomer. It depends on Mg(2+) as a cofactor.

The protein resides in the cytoplasm. An essential GTPase which binds GTP, GDP and possibly (p)ppGpp with moderate affinity, with high nucleotide exchange rates and a fairly low GTP hydrolysis rate. Plays a role in control of the cell cycle, stress response, ribosome biogenesis and in those bacteria that undergo differentiation, in morphogenesis control. In Synechococcus sp. (strain JA-3-3Ab) (Cyanobacteria bacterium Yellowstone A-Prime), this protein is GTPase Obg.